The chain runs to 207 residues: TM2 domain-containing protein 1 (207 aa).

Positions 1–37 (MAAAWPSGPSAPEAVTARLVGVLWFVSVTTGPWGAVA) are cleaved as a signal peptide. Topologically, residues 40–128 (AGGEESLKCE…YSYKVAVALS (89 aa)) are extracellular. 4 N-linked (GlcNAc...) asparagine glycosylation sites follow: N72, N75, N87, and N96. In terms of domain architecture, TM2 spans 118–166 (GYSYKVAVALSLFLGWLGADRFYLGYPALGLLKFCTVGFCGIGSLIDFI). Residues 129 to 149 (LFLGWLGADRFYLGYPALGLL) form a helical membrane-spanning segment. At 150-153 (KFCT) the chain is on the cytoplasmic side. A helical membrane pass occupies residues 154 to 174 (VGFCGIGSLIDFILISMQIVG). Over 175–207 (PSDGSSYIIDYYGTRLTRLSITNETFRKTQLYP) the chain is Extracellular. An N-linked (GlcNAc...) asparagine glycan is attached at N197.

This sequence belongs to the TM2 family. As to quaternary structure, interacts with APP beta-APP42 (amyloid-beta protein 42). N-glycosylated. Widely expressed.

Its subcellular location is the membrane. In terms of biological role, may participate in amyloid-beta-induced apoptosis via its interaction with beta-APP42. This chain is TM2 domain-containing protein 1 (TM2D1), found in Homo sapiens (Human).